A 347-amino-acid polypeptide reads, in one-letter code: Quinolinate synthase (347 aa).

Positions 47 and 68 each coordinate iminosuccinate. [4Fe-4S] cluster is bound at residue C113. Residues 139–141 (YAN) and S156 each bind iminosuccinate. [4Fe-4S] cluster is bound at residue C200. Iminosuccinate-binding positions include 226-228 (HPE) and T243. A [4Fe-4S] cluster-binding site is contributed by C297.

Belongs to the quinolinate synthase family. Type 1 subfamily. Requires [4Fe-4S] cluster as cofactor.

It localises to the cytoplasm. It catalyses the reaction iminosuccinate + dihydroxyacetone phosphate = quinolinate + phosphate + 2 H2O + H(+). The protein operates within cofactor biosynthesis; NAD(+) biosynthesis; quinolinate from iminoaspartate: step 1/1. Its function is as follows. Catalyzes the condensation of iminoaspartate with dihydroxyacetone phosphate to form quinolinate. The chain is Quinolinate synthase from Escherichia coli O139:H28 (strain E24377A / ETEC).